The primary structure comprises 81 residues: Photosystem I iron-sulfur center (81 aa).

2 consecutive 4Fe-4S ferredoxin-type domains span residues 2 to 31 and 39 to 68; these read SHKI…MIPW and IASA…VRVY. Residues Cys-11, Cys-14, Cys-17, Cys-21, Cys-48, Cys-51, Cys-54, and Cys-58 each coordinate [4Fe-4S] cluster.

The eukaryotic PSI reaction center is composed of at least 11 subunits. [4Fe-4S] cluster is required as a cofactor.

The protein resides in the plastid. Its subcellular location is the chloroplast thylakoid membrane. It catalyses the reaction reduced [plastocyanin] + hnu + oxidized [2Fe-2S]-[ferredoxin] = oxidized [plastocyanin] + reduced [2Fe-2S]-[ferredoxin]. Apoprotein for the two 4Fe-4S centers FA and FB of photosystem I (PSI); essential for photochemical activity. FB is the terminal electron acceptor of PSI, donating electrons to ferredoxin. The C-terminus interacts with PsaA/B/D and helps assemble the protein into the PSI complex. Required for binding of PsaD and PsaE to PSI. PSI is a plastocyanin-ferredoxin oxidoreductase, converting photonic excitation into a charge separation, which transfers an electron from the donor P700 chlorophyll pair to the spectroscopically characterized acceptors A0, A1, FX, FA and FB in turn. This chain is Photosystem I iron-sulfur center, found in Chara vulgaris (Common stonewort).